The following is a 145-amino-acid chain: D-aminoacyl-tRNA deacylase (145 aa).

The short motif at 137 to 138 (GP) is the Gly-cisPro motif, important for rejection of L-amino acids element.

Belongs to the DTD family. In terms of assembly, homodimer.

It is found in the cytoplasm. It carries out the reaction glycyl-tRNA(Ala) + H2O = tRNA(Ala) + glycine + H(+). It catalyses the reaction a D-aminoacyl-tRNA + H2O = a tRNA + a D-alpha-amino acid + H(+). Functionally, an aminoacyl-tRNA editing enzyme that deacylates mischarged D-aminoacyl-tRNAs. Also deacylates mischarged glycyl-tRNA(Ala), protecting cells against glycine mischarging by AlaRS. Acts via tRNA-based rather than protein-based catalysis; rejects L-amino acids rather than detecting D-amino acids in the active site. By recycling D-aminoacyl-tRNA to D-amino acids and free tRNA molecules, this enzyme counteracts the toxicity associated with the formation of D-aminoacyl-tRNA entities in vivo and helps enforce protein L-homochirality. This chain is D-aminoacyl-tRNA deacylase, found in Pseudomonas paraeruginosa (strain DSM 24068 / PA7) (Pseudomonas aeruginosa (strain PA7)).